The primary structure comprises 728 residues: Catalase-peroxidase (728 aa).

The first 19 residues, 1-19 (MSTEAKCPVTGGATRSSSA), serve as a signal peptide directing secretion. The interval 1-20 (MSTEAKCPVTGGATRSSSAG) is disordered. The tryptophyl-tyrosyl-methioninium (Trp-Tyr) (with M-245) cross-link spans 96 to 219 (WHAAGTYRIG…LAAVQMGLIY (124 aa)). Residue His-97 is the Proton acceptor of the active site. A cross-link (tryptophyl-tyrosyl-methioninium (Tyr-Met) (with W-96)) is located at residues 219–245 (YVNPEGPNGKPDPVAAARDIRETFARM). His-260 is a heme b binding site.

The protein belongs to the peroxidase family. Peroxidase/catalase subfamily. In terms of assembly, homodimer or homotetramer. The cofactor is heme b. Formation of the three residue Trp-Tyr-Met cross-link is important for the catalase, but not the peroxidase activity of the enzyme.

The catalysed reaction is H2O2 + AH2 = A + 2 H2O. It catalyses the reaction 2 H2O2 = O2 + 2 H2O. Its function is as follows. Bifunctional enzyme with both catalase and broad-spectrum peroxidase activity. This is Catalase-peroxidase from Acidiphilium cryptum (strain JF-5).